The sequence spans 778 residues: MINILKDILYKSYSYLAFPFFYLGWAIKNSYQPNKTIKEEESKPPKYPKEWSDLFIHSYNNEHEKVLEIIQKEPNSINSVDSLNWTPLHVAVSNKSIEVVTLLLERNIEISIKRYTAFHIAACNGDLNIIEKMITMNRVPNGNILSNDMETSLFLSITNNHFEISEKIMDYYQSSMNSNEFKKMIDQFNVHGVSPLIMSVLRKNLKMIKKLIEEGDADINSFKKDNSTSLHCAAIIDFTEAIEYLLDIGGIELMNSINRYGNSPIHEAAIKGNFKSIQTFINQLKKIIIKNNCSDGDSDKDKLNLLLLEIIDKKDKDGSTPLHLCCNCVNSDNIENNLKSCKVLIEEGGVQVNGIDSGNATALHILACVGEDKSLPLVKYFLSIGSDPTIENKYGWTPIHQAYNNKNIQIYQLLLDHLKLTNSTYKLDIEKKRVFQSSSTSTSSSSSSSSSSSSSSSSSSLLLNKEELKLKGIERLKNVINGIKKGEFKNVIVLSGAGISANAGIPPYRTKDGLLAKNKQFSFSMEILEKHPDVFYQAIRDHFYPIIKASNDNDRDDGISAGIKSTKSHYFINDLNEKYGCLLRNYTQNVDPLQERTGTPTDKIIHAHGSFDQWYCTVCQKQYTDKSDRIWREIGRGGLPFCTEPECRHVIRPNVVFFGEPLSQDFRVNTITDFRKADLLIVMGTSLIVYPFASLVNDVASDVPRLLFNFESTGPFVNTMDLERKEKLKQQQENESGESSNDNDNNELIVEARGNRDIVILGDCDKGVDYFNTLFNSF.

9 ANK repeats span residues 83-112 (LNWTPLHVAVSNKSIEVVTLLLERNIEISI), 114-142 (RYTAFHIAACNGDLNIIEKMITMNRVPNG), 148-178 (DMETSLFLSITNNHFEISEKIMDYYQSSMNS), 191-221 (HGVSPLIMSVLRKNLKMIKKLIEEGDADINS), 225-255 (DNSTSLHCAAIIDFTEAIEYLLDIGGIELMN), 260-289 (YGNSPIHEAAIKGNFKSIQTFINQLKKIII), 317-354 (DGSTPLHLCCNCVNSDNIENNLKSCKVLIEEGGVQVNG), 358-390 (GNATALHILACVGEDKSLPLVKYFLSIGSDPTI), and 394-423 (YGWTPIHQAYNNKNIQIYQLLLDHLKLTNS). The tract at residues 438-458 (SSTSTSSSSSSSSSSSSSSSS) is disordered. One can recognise a Deacetylase sirtuin-type domain in the interval 465 to 778 (KEELKLKGIE…DYFNTLFNSF (314 aa)). Residue H608 is the Proton acceptor of the active site. The Zn(2+) site is built by C616, C619, C642, and C647. Residues 727–746 (KLKQQQENESGESSNDNDNN) form a disordered region. Over residues 733–746 (ENESGESSNDNDNN) the composition is skewed to low complexity.

This sequence belongs to the sirtuin family. Zn(2+) is required as a cofactor.

It catalyses the reaction N(6)-acetyl-L-lysyl-[protein] + NAD(+) + H2O = 2''-O-acetyl-ADP-D-ribose + nicotinamide + L-lysyl-[protein]. NAD-dependent deacetylase, which plays an important role in the regulation of transcriptional repression. The polypeptide is NAD-dependent deacetylase sir2B (sir2B) (Dictyostelium discoideum (Social amoeba)).